A 267-amino-acid chain; its full sequence is Thiamine thiazole synthase (267 aa).

Residues serine 41, 60–61, glycine 68, valine 132, and 160–162 each bind NAD(+); these read ER and HVD. Positions 162 and 177 each coordinate Fe cation. Methionine 227 contacts NAD(+). A glycine-binding site is contributed by arginine 237.

It belongs to the THI4 family. As to quaternary structure, homooctamer; tetramer of dimers. The cofactor is Fe(2+).

The enzyme catalyses hydrogen sulfide + glycine + NAD(+) = ADP-5-ethyl-4-methylthiazole-2-carboxylate + nicotinamide + 3 H2O + H(+). The protein operates within cofactor biosynthesis; thiamine diphosphate biosynthesis. In terms of biological role, involved in the biosynthesis of the thiazole moiety of thiamine. Catalyzes the conversion of NAD and glycine to adenosine diphosphate 5-(2-hydroxyethyl)-4-methylthiazole-2-carboxylate (ADT), an adenylated thiazole intermediate, using free sulfide as a source of sulfur. This Saccharolobus islandicus (strain M.14.25 / Kamchatka #1) (Sulfolobus islandicus) protein is Thiamine thiazole synthase.